The chain runs to 448 residues: MLMHEKLMAGQFFDLKTDRKPLMHHHQYQHHQQQPLHHLPHSQLPVQGSLGLPKMDLYTAYAYQQQLLGAALSQQQQQQQQQQQHQQLQQQHTSSAEVLDLSRRCDSVETPRKTPSPYQTSYSYGSGSPSASPTSNLLYAAQMQQQQHQQQQQQQQQQQQLASLYPAFYYSNIKQEQATPTAAPPKVTPTANLLQTFAAASAAAAAAAAASSTNSPRPASNASTMQIDVLENPLSPAVEATTPTTSSSGEAGKNTRPFKAFPRDPLVIAANFAATDVLLDNPRVERYTEYRKRVLEQIRSSNGGSRTVTNPKMRRTNSRSGSVNEGSSSNNNSESEDRAAAEESSDCDSQAGNFESKSATSSSSNLANATAANSGISSGSQVKDAAYYERRRKNNAAAKKSRDRRRIKEDEIAIRAAYLERQNIELLCQIDALKVQLAAFTSAKVTTA.

Disordered stretches follow at residues 23–47 (MHHH…LPVQ), 83–134 (QQHQ…ASPT), 238–259 (VEAT…RPFK), and 298–363 (IRSS…TSSS). Over residues 30–47 (HHQQQPLHHLPHSQLPVQ) the composition is skewed to low complexity. The segment covering 100 to 112 (DLSRRCDSVETPR) has biased composition (basic and acidic residues). The span at 115–134 (PSPYQTSYSYGSGSPSASPT) shows a compositional bias: low complexity. Over residues 298-310 (IRSSNGGSRTVTN) the composition is skewed to polar residues. Low complexity predominate over residues 318-333 (SRSGSVNEGSSSNNNS). The bZIP domain maps to 384–447 (DAAYYERRRK…AAFTSAKVTT (64 aa)). The segment at 390–406 (RRRKNNAAAKKSRDRRR) is basic motif. The tract at residues 407–414 (IKEDEIAI) is leucine-zipper.

It belongs to the bZIP family. Homodimer or heterodimer. In terms of processing, phosphorylated at multiple sites.

The protein localises to the nucleus. Functionally, represses the expression of both the krueppel and knirps segmentation gap genes. Binds, in vitro, to the krueppel regulatory elements CD1 and CD2. It is required in the early embryo for the development of portions of the head and abdomen. This chain is Protein giant (gt), found in Drosophila melanogaster (Fruit fly).